A 341-amino-acid chain; its full sequence is L-threonine 3-dehydrogenase (341 aa).

Residue cysteine 38 coordinates Zn(2+). Residues threonine 40 and histidine 43 each act as charge relay system in the active site. Zn(2+) contacts are provided by histidine 63, glutamate 64, cysteine 93, cysteine 96, cysteine 99, and cysteine 107. Residues isoleucine 175, aspartate 195, arginine 200, 262-264 (LGI), and 286-287 (IY) contribute to the NAD(+) site.

Belongs to the zinc-containing alcohol dehydrogenase family. In terms of assembly, homotetramer. Requires Zn(2+) as cofactor.

Its subcellular location is the cytoplasm. It carries out the reaction L-threonine + NAD(+) = (2S)-2-amino-3-oxobutanoate + NADH + H(+). It functions in the pathway amino-acid degradation; L-threonine degradation via oxydo-reductase pathway; glycine from L-threonine: step 1/2. In terms of biological role, catalyzes the NAD(+)-dependent oxidation of L-threonine to 2-amino-3-ketobutyrate. The sequence is that of L-threonine 3-dehydrogenase from Shigella sonnei (strain Ss046).